A 329-amino-acid polypeptide reads, in one-letter code: G-protein coupled bile acid receptor 1 (329 aa).

At 1 to 18 the chain is on the extracellular side; it reads MMSHNTTELSAIPRGVQE. Asparagine 5 carries an N-linked (GlcNAc...) asparagine glycan. The chain crosses the membrane as a helical span at residues 19–39; it reads LSLVLASLIVIANLLLALGIV. Residues 40 to 49 lie on the Cytoplasmic side of the membrane; sequence LDRHLRSPPA. The helical transmembrane segment at 50–70 threads the bilayer; sequence GCFFLSLLLAGLLTGLALPTL. Topologically, residues 71-84 are extracellular; that stretch reads PGLWNRSHQGYWSC. N-linked (GlcNAc...) asparagine glycosylation occurs at asparagine 75. Residues cysteine 84 and cysteine 154 are joined by a disulfide bond. The chain crosses the membrane as a helical span at residues 85–105; it reads LLLHLAPNFCFLSLLANLLLV. Topologically, residues 106–124 are cytoplasmic; it reads HGERYMAVLQPLRPHGSVR. The chain crosses the membrane as a helical span at residues 125–145; that stretch reads LALFLTWISSLLFASLPALGW. Residues 146 to 157 lie on the Extracellular side of the membrane; sequence NHWSPGANCSSQ. A glycan (N-linked (GlcNAc...) asparagine) is linked at asparagine 153. Residues 158 to 178 traverse the membrane as a helical segment; that stretch reads AIFPAPYLYLEVYGLLLPAVG. Over 179 to 229 the chain is Cytoplasmic; the sequence is ATALLSVRVLATAHHQLREIRRLERAVCRDAPSTLARALTWRQARAQAGAT. The chain crosses the membrane as a helical span at residues 230–250; the sequence is LLFLLCWGPYVATLLLSVLAY. Over 251–260 the chain is Extracellular; it reads ERRPPLGPVT. A helical transmembrane segment spans residues 261–281; the sequence is LLSLISLGSASAAVVPVAMGL. Topologically, residues 282–329 are cytoplasmic; sequence GDQRYTAPWRTAAQRWLQVLRGRPKRANPGPSTAYHSSSQCSTDLDLN. The disordered stretch occupies residues 306-329; it reads KRANPGPSTAYHSSSQCSTDLDLN. A compositionally biased stretch (polar residues) spans 311 to 329; that stretch reads GPSTAYHSSSQCSTDLDLN.

The protein belongs to the G-protein coupled receptor 1 family.

It is found in the cell membrane. In terms of biological role, receptor for bile acid. Bile acid-binding induces its internalization, activation of extracellular signal-regulated kinase and intracellular cAMP production. May be involved in the suppression of macrophage functions by bile acids. Involved in bile acid promoted GLP1R secretion. In Rattus norvegicus (Rat), this protein is G-protein coupled bile acid receptor 1 (Gpbar1).